Here is an 88-residue protein sequence, read N- to C-terminus: DNA-directed RNA polymerase subunit omega (88 aa).

The protein belongs to the RNA polymerase subunit omega family. As to quaternary structure, the RNAP catalytic core consists of 2 alpha, 1 beta, 1 beta' and 1 omega subunit. When a sigma factor is associated with the core the holoenzyme is formed, which can initiate transcription.

The enzyme catalyses RNA(n) + a ribonucleoside 5'-triphosphate = RNA(n+1) + diphosphate. In terms of biological role, promotes RNA polymerase assembly. Latches the N- and C-terminal regions of the beta' subunit thereby facilitating its interaction with the beta and alpha subunits. The polypeptide is DNA-directed RNA polymerase subunit omega (Anaeromyxobacter dehalogenans (strain 2CP-1 / ATCC BAA-258)).